A 319-amino-acid chain; its full sequence is Protoheme IX farnesyltransferase (319 aa).

Transmembrane regions (helical) follow at residues 34–54 (VMSLVVFTAFAGLVLAPGHIN), 55–75 (PVLGLIAILCIAVGAGASGAL), 95–115 (IPAGRVAPSEALAFGLVLSGF), 119–139 (ILGLAVNWLSAAILAFTIFFY), 155–175 (IVIGGAAGAFPPVIGWACVTG), 182–202 (VVLFLIIFLWTPAHFWALALF), 221–241 (VPTTKNQIVAYAVLTAIIGVV), 244–264 (FMGFASLGYGVVATVLGVIFV), and 291–311 (IFYLFAIFSALLIDRLVAVLM).

This sequence belongs to the UbiA prenyltransferase family. Protoheme IX farnesyltransferase subfamily.

It localises to the cell inner membrane. It carries out the reaction heme b + (2E,6E)-farnesyl diphosphate + H2O = Fe(II)-heme o + diphosphate. It functions in the pathway porphyrin-containing compound metabolism; heme O biosynthesis; heme O from protoheme: step 1/1. Converts heme B (protoheme IX) to heme O by substitution of the vinyl group on carbon 2 of heme B porphyrin ring with a hydroxyethyl farnesyl side group. This chain is Protoheme IX farnesyltransferase, found in Rhizobium rhizogenes (strain K84 / ATCC BAA-868) (Agrobacterium radiobacter).